The chain runs to 77 residues: Acyl carrier protein (77 aa).

The Carrier domain maps to 2 to 77 (ADTLERVTKI…DAVNYIQNQQ (76 aa)). Ser37 is subject to O-(pantetheine 4'-phosphoryl)serine.

The protein belongs to the acyl carrier protein (ACP) family. 4'-phosphopantetheine is transferred from CoA to a specific serine of apo-ACP by AcpS. This modification is essential for activity because fatty acids are bound in thioester linkage to the sulfhydryl of the prosthetic group.

Its subcellular location is the cytoplasm. It participates in lipid metabolism; fatty acid biosynthesis. Functionally, carrier of the growing fatty acid chain in fatty acid biosynthesis. In Bacillus subtilis (strain 168), this protein is Acyl carrier protein (acpA).